The primary structure comprises 113 residues: Large ribosomal subunit protein uL24 (113 aa).

It belongs to the universal ribosomal protein uL24 family. In terms of assembly, part of the 50S ribosomal subunit.

One of two assembly initiator proteins, it binds directly to the 5'-end of the 23S rRNA, where it nucleates assembly of the 50S subunit. Functionally, one of the proteins that surrounds the polypeptide exit tunnel on the outside of the subunit. This Rickettsia typhi (strain ATCC VR-144 / Wilmington) protein is Large ribosomal subunit protein uL24.